Reading from the N-terminus, the 250-residue chain is 1-acyl-sn-glycerol-3-phosphate acyltransferase (250 aa).

The HXXXXD motif signature appears at 88-93 (HIAAMD).

It belongs to the 1-acyl-sn-glycerol-3-phosphate acyltransferase family.

It catalyses the reaction a 1-acyl-sn-glycero-3-phosphate + an acyl-CoA = a 1,2-diacyl-sn-glycero-3-phosphate + CoA. It functions in the pathway phospholipid metabolism; CDP-diacylglycerol biosynthesis; CDP-diacylglycerol from sn-glycerol 3-phosphate: step 2/3. Its function is as follows. Converts lysophosphatidic acid (LPA) into phosphatidic acid by incorporating acyl moiety at the 2 position. The protein is 1-acyl-sn-glycerol-3-phosphate acyltransferase (plsC) of Borreliella burgdorferi (strain ATCC 35210 / DSM 4680 / CIP 102532 / B31) (Borrelia burgdorferi).